The primary structure comprises 155 residues: Endoribonuclease YbeY (155 aa).

Zn(2+)-binding residues include H114, H118, and H124.

It belongs to the endoribonuclease YbeY family. Zn(2+) serves as cofactor.

The protein resides in the cytoplasm. In terms of biological role, single strand-specific metallo-endoribonuclease involved in late-stage 70S ribosome quality control and in maturation of the 3' terminus of the 16S rRNA. The chain is Endoribonuclease YbeY from Photorhabdus laumondii subsp. laumondii (strain DSM 15139 / CIP 105565 / TT01) (Photorhabdus luminescens subsp. laumondii).